The chain runs to 127 residues: Large ribosomal subunit protein bL20 (127 aa).

Belongs to the bacterial ribosomal protein bL20 family.

Functionally, binds directly to 23S ribosomal RNA and is necessary for the in vitro assembly process of the 50S ribosomal subunit. It is not involved in the protein synthesizing functions of that subunit. This is Large ribosomal subunit protein bL20 from Bifidobacterium longum (strain NCC 2705).